Here is a 412-residue protein sequence, read N- to C-terminus: uncharacterized protein (412 aa).

11 consecutive transmembrane segments (helical) span residues 17 to 37 (LLLALALTMGVFAAGSEELVI), 54 to 74 (VLALSISIYGVMIFIGAPLLV), 91 to 111 (MIFIIGTVICALAQNIFFFFL), 112 to 132 (GRALSGLAAGAFVPTAYAVVG), 146 to 166 (LIVSSWSLALIFGVPLGSFIG), 173 to 193 (WTFWIFALMGVLVVLLILLEM), 225 to 245 (VYITITFCNMIGFYGMYSFLG), 257 to 277 (TAAGLFIMIYGIGFSMSVITG), 299 to 319 (LLACLPYAPASMFLLIASLFI), 346 to 366 (VMVFYSLASNLAVTLGSALMG), and 375 to 395 (AAVGLICAAITVLGFVLSVFA).

It belongs to the major facilitator superfamily.

It is found in the cell membrane. This is an uncharacterized protein from Bacillus subtilis (strain 168).